Here is a 481-residue protein sequence, read N- to C-terminus: Cobyric acid synthase (481 aa).

Positions 249–436 (GLHIVCLRLS…LHGMFRDDAF (188 aa)) constitute a GATase cobBQ-type domain. Catalysis depends on cysteine 331, which acts as the Nucleophile. The active site involves histidine 428.

Belongs to the CobB/CobQ family. CobQ subfamily.

Its pathway is cofactor biosynthesis; adenosylcobalamin biosynthesis. Catalyzes amidations at positions B, D, E, and G on adenosylcobyrinic A,C-diamide. NH(2) groups are provided by glutamine, and one molecule of ATP is hydrogenolyzed for each amidation. This chain is Cobyric acid synthase, found in Jannaschia sp. (strain CCS1).